Consider the following 403-residue polypeptide: Phosphopentomutase (403 aa).

Mn(2+) contacts are provided by Asp-13, Asp-298, His-303, Asp-339, His-340, and His-351.

Belongs to the phosphopentomutase family. The cofactor is Mn(2+).

Its subcellular location is the cytoplasm. The enzyme catalyses 2-deoxy-alpha-D-ribose 1-phosphate = 2-deoxy-D-ribose 5-phosphate. It catalyses the reaction alpha-D-ribose 1-phosphate = D-ribose 5-phosphate. The protein operates within carbohydrate degradation; 2-deoxy-D-ribose 1-phosphate degradation; D-glyceraldehyde 3-phosphate and acetaldehyde from 2-deoxy-alpha-D-ribose 1-phosphate: step 1/2. In terms of biological role, isomerase that catalyzes the conversion of deoxy-ribose 1-phosphate (dRib-1-P) and ribose 1-phosphate (Rib-1-P) to deoxy-ribose 5-phosphate (dRib-5-P) and ribose 5-phosphate (Rib-5-P), respectively. In Streptococcus equi subsp. zooepidemicus (strain H70), this protein is Phosphopentomutase.